Consider the following 572-residue polypeptide: Phenylalanine--tRNA ligase beta subunit (572 aa).

The B5 domain maps to 285 to 363; it reads LSTTTKTVSH…RAFGFNELEP (79 aa). Positions 341, 347, 350, and 351 each coordinate Mg(2+).

This sequence belongs to the phenylalanyl-tRNA synthetase beta subunit family. Type 2 subfamily. In terms of assembly, tetramer of two alpha and two beta subunits. It depends on Mg(2+) as a cofactor.

The protein localises to the cytoplasm. It catalyses the reaction tRNA(Phe) + L-phenylalanine + ATP = L-phenylalanyl-tRNA(Phe) + AMP + diphosphate + H(+). This is Phenylalanine--tRNA ligase beta subunit from Natronomonas pharaonis (strain ATCC 35678 / DSM 2160 / CIP 103997 / JCM 8858 / NBRC 14720 / NCIMB 2260 / Gabara) (Halobacterium pharaonis).